The sequence spans 100 residues: Toxin Rv0299 (100 aa).

In terms of biological role, toxic component of a type II toxin-antitoxin (TA) system. Upon expression in M.smegmatis inhibits colony formation. Its toxic effect is neutralized by coexpression with cognate antitoxin Rv0298/MT0312. The polypeptide is Toxin Rv0299 (Mycobacterium tuberculosis (strain ATCC 25618 / H37Rv)).